We begin with the raw amino-acid sequence, 362 residues long: Glutamate 5-kinase (362 aa).

Lys-3 is an ATP binding site. Positions 43, 128, and 140 each coordinate substrate. Residues 160–161 (TD) and 202–208 (TGGMRTK) each bind ATP. A PUA domain is found at 267-348 (AGAILIDDGA…REIENVLGYS (82 aa)).

Belongs to the glutamate 5-kinase family.

It localises to the cytoplasm. The enzyme catalyses L-glutamate + ATP = L-glutamyl 5-phosphate + ADP. It participates in amino-acid biosynthesis; L-proline biosynthesis; L-glutamate 5-semialdehyde from L-glutamate: step 1/2. In terms of biological role, catalyzes the transfer of a phosphate group to glutamate to form L-glutamate 5-phosphate. This Xanthomonas euvesicatoria pv. vesicatoria (strain 85-10) (Xanthomonas campestris pv. vesicatoria) protein is Glutamate 5-kinase.